The following is a 1587-amino-acid chain: Mediator of RNA polymerase II transcription subunit 23 (1587 aa).

Disordered regions lie at residues 1374–1484 (SQSE…QLQH) and 1567–1587 (QHQQYMQQQQQHHHQHQQQPH). Positions 1385–1404 (PPEKEKSPEKEKEQEQEQHV) are enriched in basic and acidic residues. An acidic region spans residues 1387-1404 (EKEKSPEKEKEQEQEQHV). Residues 1410–1426 (LESTPSVSSLPQMQHHL) show a composition bias toward polar residues. Residues 1430-1450 (PLLPSHQMMPPPQQHSSSLQH) are compositionally biased toward low complexity. Residues 1463 to 1484 (DTSQHQTIQQQSNHPTQQQLQH) show a composition bias toward polar residues. Over residues 1567–1576 (QHQQYMQQQQ) the composition is skewed to low complexity. A compositionally biased stretch (basic residues) spans 1577–1587 (QHHHQHQQQPH).

Belongs to the Mediator complex subunit 23 family. As to quaternary structure, component of the Mediator complex. Interacts with let-19/mdt-13.

It is found in the nucleus. Component of the Mediator complex, a coactivator involved in regulated gene transcription of nearly all RNA polymerase II-dependent genes. Mediator functions as a bridge to convey information from gene-specific regulatory proteins to the basal RNA polymerase II transcription machinery. Mediator is recruited to promoters by direct interactions with regulatory proteins and serves as a scaffold for the assembly of a functional pre-initiation complex with RNA polymerase II and the general transcription factors. Functions downstream of receptor let-23 and let-60/Ras during vulval induction likely by down-regulating the expression of phosphatase dep-1 and lin-12/Notch in vulva precursor cell descendants with a primary cell fate. Acts to repress beta-catenin target genes. Required for asymmetric division of T-cells. Plays a role in responses to M.nematophilum-mediated bacterial infection by promoting tail swelling and preventing constipation. In Caenorhabditis elegans, this protein is Mediator of RNA polymerase II transcription subunit 23 (sur-2).